The sequence spans 209 residues: Uracil phosphoribosyltransferase (209 aa).

Residues R79, R104, and 131 to 139 each bind 5-phospho-alpha-D-ribose 1-diphosphate; that span reads DPMLATGNS. Residues I194 and 199–201 contribute to the uracil site; that span reads GDA. 5-phospho-alpha-D-ribose 1-diphosphate is bound at residue D200.

Belongs to the UPRTase family. Mg(2+) is required as a cofactor.

The enzyme catalyses UMP + diphosphate = 5-phospho-alpha-D-ribose 1-diphosphate + uracil. It participates in pyrimidine metabolism; UMP biosynthesis via salvage pathway; UMP from uracil: step 1/1. With respect to regulation, allosterically activated by GTP. Its function is as follows. Catalyzes the conversion of uracil and 5-phospho-alpha-D-ribose 1-diphosphate (PRPP) to UMP and diphosphate. The protein is Uracil phosphoribosyltransferase of Acidovorax sp. (strain JS42).